The primary structure comprises 275 residues: Adenylate kinase 2 (275 aa).

G2 carries the N-myristoyl glycine lipid modification. The tract at residues K21–K30 is required for cell membrane translocation but dispensable for cell membrane localization. G39–T44 serves as a coordination point for ATP. Residues C59 to V97 form an NMP region. Residues S95–V97, G126–R129, and Q133 each bind AMP. R164 serves as a coordination point for ATP. The LID stretch occupies residues I165–L214. Residues R220 and R231 each contribute to the AMP site.

Belongs to the adenylate kinase family. As to quaternary structure, monomer. Oligomer. Heterodimer composed of NMT and AK2; AK2 myristoylation stabilizes the complex. Myristoylation is required for cell membrane localization. In terms of processing, may be palmitoylated at Cys-4 which stabilizes cell membrane localization of the myristoylated protein.

The protein resides in the parasitophorous vacuole membrane. It carries out the reaction AMP + ATP = 2 ADP. Catalyzes the reversible transfer of the terminal phosphate group between ATP and AMP. Has very low activity with CTP, GTP, ITP and UTP and no activity with GMP, UMP or IMP in vitro. The chain is Adenylate kinase 2 from Plasmodium falciparum (isolate 3D7).